Reading from the N-terminus, the 1011-residue chain is Translation initiation factor IF-2 (1011 aa).

Positions 49–77 (YIHEHGTEESPRRRSAGEDEFKPKIDLSK) are enriched in basic and acidic residues. Disordered regions lie at residues 49–152 (YIHE…RFIT) and 187–407 (AAPA…LSLS). Positions 93-104 (APPPPPPPPPRP) are enriched in pro residues. Residues 105 to 115 (AVKAPSPVSQE) are compositionally biased toward low complexity. Residues 116 to 126 (PRPPAVPPAPQ) show a composition bias toward pro residues. Low complexity-rich tracts occupy residues 187–212 (AAPA…KAPV) and 228–242 (TAKP…AATP). Composition is skewed to pro residues over residues 243-252 (APTPGRPLPG) and 276-290 (SAPP…PPPQ). Over residues 316-329 (GPGGGSGGPGGFQR) the composition is skewed to gly residues. Positions 361-380 (LAPPGAPANKPAGRPAPARR) are enriched in low complexity. Residues 502 to 678 (VRPPVVTIMG…CLVADLGDLK (177 aa)) enclose the tr-type G domain. A G1 region spans residues 511–518 (GHVDHGKT). 511-518 (GHVDHGKT) serves as a coordination point for GTP. The G2 stretch occupies residues 536-540 (GITQH). The segment at 564–567 (DTPG) is G3. GTP is bound by residues 564-568 (DTPGH) and 618-621 (NKID). The tract at residues 618–621 (NKID) is G4. The tract at residues 654–656 (SAK) is G5.

Belongs to the TRAFAC class translation factor GTPase superfamily. Classic translation factor GTPase family. IF-2 subfamily.

It localises to the cytoplasm. Its function is as follows. One of the essential components for the initiation of protein synthesis. Protects formylmethionyl-tRNA from spontaneous hydrolysis and promotes its binding to the 30S ribosomal subunits. Also involved in the hydrolysis of GTP during the formation of the 70S ribosomal complex. In Koribacter versatilis (strain Ellin345), this protein is Translation initiation factor IF-2.